A 519-amino-acid chain; its full sequence is Xylose import ATP-binding protein XylG (519 aa).

2 consecutive ABC transporter domains span residues 6–245 and 262–507; these read LTMR…VGRE and LDVR…LKPA. 38-45 is an ATP binding site; it reads GENGAGKS.

This sequence belongs to the ABC transporter superfamily. Xylose importer (TC 3.A.1.2.4) family. In terms of assembly, the complex is composed of two ATP-binding proteins (XylG), two transmembrane proteins (XylH) and a solute-binding protein (XylF).

Its subcellular location is the cell inner membrane. The catalysed reaction is D-xylose(out) + ATP + H2O = D-xylose(in) + ADP + phosphate + H(+). In terms of biological role, part of the ABC transporter complex XylFGH involved in xylose import. Responsible for energy coupling to the transport system. This chain is Xylose import ATP-binding protein XylG, found in Burkholderia cenocepacia (strain HI2424).